We begin with the raw amino-acid sequence, 265 residues long: 4-hydroxy-tetrahydrodipicolinate reductase (265 aa).

Residues 7–12 and Asp33 contribute to the NAD(+) site; that span reads GASGRM. NADP(+) is bound at residue Arg34. NAD(+) is bound by residues 96–98 and 120–123; these read GTT and AANM. The active-site Proton donor/acceptor is His153. His154 is a (S)-2,3,4,5-tetrahydrodipicolinate binding site. Lys157 acts as the Proton donor in catalysis. 163 to 164 is a binding site for (S)-2,3,4,5-tetrahydrodipicolinate; it reads GT.

It belongs to the DapB family.

The protein localises to the cytoplasm. It catalyses the reaction (S)-2,3,4,5-tetrahydrodipicolinate + NAD(+) + H2O = (2S,4S)-4-hydroxy-2,3,4,5-tetrahydrodipicolinate + NADH + H(+). The catalysed reaction is (S)-2,3,4,5-tetrahydrodipicolinate + NADP(+) + H2O = (2S,4S)-4-hydroxy-2,3,4,5-tetrahydrodipicolinate + NADPH + H(+). The protein operates within amino-acid biosynthesis; L-lysine biosynthesis via DAP pathway; (S)-tetrahydrodipicolinate from L-aspartate: step 4/4. In terms of biological role, catalyzes the conversion of 4-hydroxy-tetrahydrodipicolinate (HTPA) to tetrahydrodipicolinate. This chain is 4-hydroxy-tetrahydrodipicolinate reductase, found in Burkholderia ambifaria (strain MC40-6).